We begin with the raw amino-acid sequence, 308 residues long: FGSLLGICLLTQIITGLLLATHYTADTSLAFSSVAHMCRDVQFGWLIRNLHANGASFFFICIYIHIGRGLYYGSYLNKETWNVGVILLLTLMATAFVGYVLPWGQMSFWGATVITNLFSAIPYIGQTLVEWAWGGFSVDNPTLTRFFALHFLLPFAITGLTLVHLTFLHETGSNNPLGIPSDCDKIPFHPYYSMKDILGFALMIIPLAALALFSPNLLGDPENFTPANPLATPPHIKPEWYFLFAYAILRSIPNKLGGVLALAASILVLFLIPLLHKSKQRSMTFRPLSQILFWTLVANLLILTWVGS.

The next 4 helical transmembrane spans lie at 1–21, 45–66, 81–101, and 146–166; these read FGSLLGICLLTQIITGLLLAT, WLIRNLHANGASFFFICIYIHI, WNVGVILLLTLMATAFVGYVL, and FFALHFLLPFAITGLTLVHLT. Heme b contacts are provided by histidine 51 and histidine 65. 2 residues coordinate heme b: histidine 150 and histidine 164. Histidine 169 provides a ligand contact to a ubiquinone. Helical transmembrane passes span 194-214, 256-276, and 288-308; these read MKDILGFALMIIPLAALALFS, LGGVLALAASILVLFLIPLLH, and LSQILFWTLVANLLILTWVGS.

This sequence belongs to the cytochrome b family. As to quaternary structure, the cytochrome bc1 complex contains 11 subunits: 3 respiratory subunits (MT-CYB, CYC1 and UQCRFS1), 2 core proteins (UQCRC1 and UQCRC2) and 6 low-molecular weight proteins (UQCRH/QCR6, UQCRB/QCR7, UQCRQ/QCR8, UQCR10/QCR9, UQCR11/QCR10 and a cleavage product of UQCRFS1). This cytochrome bc1 complex then forms a dimer. Heme b is required as a cofactor.

It is found in the mitochondrion inner membrane. Component of the ubiquinol-cytochrome c reductase complex (complex III or cytochrome b-c1 complex) that is part of the mitochondrial respiratory chain. The b-c1 complex mediates electron transfer from ubiquinol to cytochrome c. Contributes to the generation of a proton gradient across the mitochondrial membrane that is then used for ATP synthesis. This Ptiloprora plumbea (Leaden honeyeater) protein is Cytochrome b (MT-CYB).